Consider the following 122-residue polypeptide: Histone H2B, gonadal (122 aa).

A disordered region spans residues 1–31 (MPPKVSSKGAKKAGKAKAARSGDKKRKRRRK). Basic residues predominate over residues 9 to 31 (GAKKAGKAKAARSGDKKRKRRRK). Ser109 carries an O-linked (GlcNAc) serine glycan. Residue Lys117 forms a Glycyl lysine isopeptide (Lys-Gly) (interchain with G-Cter in ubiquitin) linkage.

Belongs to the histone H2B family. As to quaternary structure, the nucleosome is a histone octamer containing two molecules each of H2A, H2B, H3 and H4 assembled in one H3-H4 heterotetramer and two H2A-H2B heterodimers. The octamer wraps approximately 147 bp of DNA. In terms of processing, monoubiquitination of Lys-117 gives a specific tag for epigenetic transcriptional activation and is also prerequisite for histone H3 'Lys-4' and 'Lys-79' methylation. GlcNAcylation at Ser-109 promotes monoubiquitination of Lys-117. It fluctuates in response to extracellular glucose, and associates with transcribed genes.

Its subcellular location is the nucleus. It is found in the chromosome. In terms of biological role, core component of nucleosome. Nucleosomes wrap and compact DNA into chromatin, limiting DNA accessibility to the cellular machineries which require DNA as a template. Histones thereby play a central role in transcription regulation, DNA repair, DNA replication and chromosomal stability. DNA accessibility is regulated via a complex set of post-translational modifications of histones, also called histone code, and nucleosome remodeling. In Patella granatina (Sandpaper limpet), this protein is Histone H2B, gonadal.